A 478-amino-acid chain; its full sequence is FERM domain-containing protein B (478 aa).

3 disordered regions span residues 19-39, 129-196, and 202-221; these read ELIPTQSQGSPSLSSSSTITS, EENS…GFLT, and KAQSPQLQSQSSSLSTTIAS. Composition is skewed to low complexity over residues 22 to 39 and 129 to 164; these read PTQSQGSPSLSSSSTITS and EENSPSSSTSSPILSGLSSIRGKKSNASSTSNANDG. An FERM domain is found at 48-468; it reads VLIRIYFIDD…DWSEEWESKE (421 aa). Over residues 165–179 the composition is skewed to gly residues; that stretch reads SGSGSGSGSGSGSGS. 2 stretches are compositionally biased toward low complexity: residues 180-189 and 204-216; these read GTSTPNSPKG and QSPQLQSQSSSLS.

The chain is FERM domain-containing protein B (frmB) from Dictyostelium discoideum (Social amoeba).